The following is a 142-amino-acid chain: Membrane protein YneK (142 aa).

Residues F6 to F26 form a helical membrane-spanning segment.

Interacts with the N-terminal D1 domain of dynamin-like protein DynA.

Its subcellular location is the cell membrane. This Bacillus subtilis (strain 168) protein is Membrane protein YneK (yneK).